The primary structure comprises 358 residues: Methionine aminopeptidase 2 (358 aa).

His111 is a substrate binding site. A divalent metal cation is bound by residues Asp131, Asp142, and His211. His219 is a substrate binding site. A divalent metal cation is bound by residues Glu244 and Glu339.

The protein belongs to the peptidase M24A family. Methionine aminopeptidase eukaryotic type 2 subfamily. Co(2+) serves as cofactor. It depends on Zn(2+) as a cofactor. The cofactor is Mn(2+). Requires Fe(2+) as cofactor.

It localises to the cytoplasm. The enzyme catalyses Release of N-terminal amino acids, preferentially methionine, from peptides and arylamides.. Functionally, cotranslationally removes the N-terminal methionine from nascent proteins. The N-terminal methionine is often cleaved when the second residue in the primary sequence is small and uncharged (Met-Ala-, Cys, Gly, Pro, Ser, Thr, or Val). The chain is Methionine aminopeptidase 2 from Laccaria bicolor (strain S238N-H82 / ATCC MYA-4686) (Bicoloured deceiver).